A 205-amino-acid polypeptide reads, in one-letter code: GTP cyclohydrolase-2 (205 aa).

Arg-49 to Glu-53 provides a ligand contact to GTP. Zn(2+) is bound by residues Cys-54, Cys-65, and Cys-67. Residues Gln-70, Glu-92–Arg-94, and Thr-114 contribute to the GTP site. Asp-126 serves as the catalytic Proton acceptor. Arg-128 functions as the Nucleophile in the catalytic mechanism. The GTP site is built by Thr-149 and Lys-154.

Belongs to the GTP cyclohydrolase II family. The cofactor is Zn(2+).

The catalysed reaction is GTP + 4 H2O = 2,5-diamino-6-hydroxy-4-(5-phosphoribosylamino)-pyrimidine + formate + 2 phosphate + 3 H(+). It participates in cofactor biosynthesis; riboflavin biosynthesis; 5-amino-6-(D-ribitylamino)uracil from GTP: step 1/4. Its function is as follows. Catalyzes the conversion of GTP to 2,5-diamino-6-ribosylamino-4(3H)-pyrimidinone 5'-phosphate (DARP), formate and pyrophosphate. This chain is GTP cyclohydrolase-2, found in Pseudomonas aeruginosa (strain LESB58).